The primary structure comprises 251 residues: MHSSYSLSKCLVCFTILAIQTLIRRVSSLNRTNAYLNHKCLVIQGKYKRQSEYEENLNYIIDHISSTQKFPDGFTHTSRGEAPNFVTIVFQCRGDSYGSKCRSCYATPISGIRRRCQGYKGAIIWDQCFLDISTINSPPTMIDYENTFSMHNQNNVNEDAESFNKKTRDFLYNLMLKADKPKAGSYAAGEMRLGTKNLYAMVQCALDIFECKVCLEWSINELSKCCHSKKGARFLGTSCNIRYELYPFLST.

Residues M1–S28 form the signal peptide. Gnk2-homologous domains follow at residues Y35–P139 and Y144–F248.

This sequence belongs to the cysteine-rich repeat secretory protein family.

The protein resides in the secreted. The protein is Putative cysteine-rich repeat secretory protein 36 (CRRSP36) of Arabidopsis thaliana (Mouse-ear cress).